The following is a 153-amino-acid chain: Holo-[acyl-carrier-protein] synthase (153 aa).

Positions 24 and 78 each coordinate Mg(2+).

It belongs to the P-Pant transferase superfamily. AcpS family. Requires Mg(2+) as cofactor.

The protein resides in the cytoplasm. It carries out the reaction apo-[ACP] + CoA = holo-[ACP] + adenosine 3',5'-bisphosphate + H(+). In terms of biological role, transfers the 4'-phosphopantetheine moiety from coenzyme A to a Ser of acyl-carrier-protein. In Bordetella pertussis (strain Tohama I / ATCC BAA-589 / NCTC 13251), this protein is Holo-[acyl-carrier-protein] synthase.